Reading from the N-terminus, the 120-residue chain is Cell cycle protein GpsB (120 aa).

The stretch at 32–68 (LDDIIKDYETYAALVKELREENRRLKEELAAKPVEKA) forms a coiled coil. The disordered stretch occupies residues 63–88 (KPVEKAPVQPTQPVQSTQATQSTVES). Low complexity predominate over residues 68-86 (APVQPTQPVQSTQATQSTV).

It belongs to the GpsB family. In terms of assembly, forms polymers through the coiled coil domains. Interacts with PBP1, MreC and EzrA.

It localises to the cytoplasm. In terms of biological role, divisome component that associates with the complex late in its assembly, after the Z-ring is formed, and is dependent on DivIC and PBP2B for its recruitment to the divisome. Together with EzrA, is a key component of the system that regulates PBP1 localization during cell cycle progression. Its main role could be the removal of PBP1 from the cell pole after pole maturation is completed. Also contributes to the recruitment of PBP1 to the division complex. Not essential for septum formation. The chain is Cell cycle protein GpsB from Streptococcus sanguinis (strain SK36).